Reading from the N-terminus, the 21-residue chain is Fibrinogen beta chain (21 aa).

Pyrrolidone carboxylic acid is present on Gln-1. A compositionally biased stretch (acidic residues) spans 1–11; that stretch reads QHSTDYDEEEE. A disordered region spans residues 1-21; that stretch reads QHSTDYDEEEEDRAKLHLDAR. A glycan (O-linked (GalNAc...) threonine) is linked at Thr-4. At Tyr-6 the chain carries Sulfotyrosine. The segment covering 12–21 has biased composition (basic and acidic residues); the sequence is DRAKLHLDAR.

Heterohexamer; disulfide linked. Contains 2 sets of 3 non-identical chains (alpha, beta and gamma). The 2 heterotrimers are in head to head conformation with the N-termini in a small central domain. In terms of processing, conversion of fibrinogen to fibrin is triggered by thrombin, which cleaves fibrinopeptides A and B from alpha and beta chains, and thus exposes the N-terminal polymerization sites responsible for the formation of the soft clot.

The protein localises to the secreted. In terms of biological role, cleaved by the protease thrombin to yield monomers which, together with fibrinogen alpha (FGA) and fibrinogen gamma (FGG), polymerize to form an insoluble fibrin matrix. Fibrin has a major function in hemostasis as one of the primary components of blood clots. In addition, functions during the early stages of wound repair to stabilize the lesion and guide cell migration during re-epithelialization. Was originally thought to be essential for platelet aggregation, based on in vitro studies using anticoagulated blood. However subsequent studies have shown that it is not absolutely required for thrombus formation in vivo. Enhances expression of SELP in activated platelets. Maternal fibrinogen is essential for successful pregnancy. Fibrin deposition is also associated with infection, where it protects against IFNG-mediated hemorrhage. May also facilitate the antibacterial immune response via both innate and T-cell mediated pathways. This chain is Fibrinogen beta chain (FGB), found in Cervus elaphus (Red deer).